The following is a 94-amino-acid chain: Protein EGG APPARATUS-1 (94 aa).

Topologically, residues M1–G15 are cytoplasmic. A helical; Signal-anchor for type II membrane protein membrane pass occupies residues I16–L36. Residues W37–S94 lie on the Extracellular side of the membrane.

In terms of processing, possible proteolysis of the C-terminal region from the predicted transmembrane domain to permit secretion and transport of the mature protein to the cell walls of the nucellus, allowing the spreading from the egg cell apparatus to the micropylar opening of the ovule. As to expression, expressed only in the egg apparatus, consisting of the egg cell and two synergids. Not detected in the central cell, antipodals, and nucellar and integumental cells.

It is found in the membrane. Functionally, involved in short-range signaling required for pollen tube attraction by the female gametophyte. Required for female fertility. The protein is Protein EGG APPARATUS-1 (Ea1) of Zea mays (Maize).